The chain runs to 160 residues: Sperm acrosome-associated protein 5 (160 aa).

The signal sequence occupies residues 1 to 21 (MKVCSIVVVILAVLLIAKLDA). Residues 22 to 150 (KIYERCELAK…SEWLKGCSVR (129 aa)) enclose the C-type lysozyme domain. Intrachain disulfides connect cysteine 27/cysteine 147, cysteine 51/cysteine 135, cysteine 85/cysteine 100, and cysteine 96/cysteine 114. Residue glutamate 56 is part of the active site.

This sequence belongs to the glycosyl hydrolase 22 family.

It is found in the secreted. It carries out the reaction Hydrolysis of (1-&gt;4)-beta-linkages between N-acetylmuramic acid and N-acetyl-D-glucosamine residues in a peptidoglycan and between N-acetyl-D-glucosamine residues in chitodextrins.. The polypeptide is Sperm acrosome-associated protein 5 (Spaca5) (Mus musculus (Mouse)).